The primary structure comprises 435 residues: Trigger factor (435 aa).

One can recognise a PPIase FKBP-type domain in the interval 163 to 248 (GDFVTFDFKG…IKEIKVKELP (86 aa)).

Belongs to the FKBP-type PPIase family. Tig subfamily.

It is found in the cytoplasm. The enzyme catalyses [protein]-peptidylproline (omega=180) = [protein]-peptidylproline (omega=0). Functionally, involved in protein export. Acts as a chaperone by maintaining the newly synthesized protein in an open conformation. Functions as a peptidyl-prolyl cis-trans isomerase. This Citrifermentans bemidjiense (strain ATCC BAA-1014 / DSM 16622 / JCM 12645 / Bem) (Geobacter bemidjiensis) protein is Trigger factor.